We begin with the raw amino-acid sequence, 93 residues long: Small ribosomal subunit protein uS19 (93 aa).

This sequence belongs to the universal ribosomal protein uS19 family.

Its function is as follows. Protein S19 forms a complex with S13 that binds strongly to the 16S ribosomal RNA. The sequence is that of Small ribosomal subunit protein uS19 from Helicobacter acinonychis (strain Sheeba).